A 345-amino-acid polypeptide reads, in one-letter code: S-adenosylmethionine:tRNA ribosyltransferase-isomerase (345 aa).

This sequence belongs to the QueA family. In terms of assembly, monomer.

Its subcellular location is the cytoplasm. It catalyses the reaction 7-aminomethyl-7-carbaguanosine(34) in tRNA + S-adenosyl-L-methionine = epoxyqueuosine(34) in tRNA + adenine + L-methionine + 2 H(+). It participates in tRNA modification; tRNA-queuosine biosynthesis. In terms of biological role, transfers and isomerizes the ribose moiety from AdoMet to the 7-aminomethyl group of 7-deazaguanine (preQ1-tRNA) to give epoxyqueuosine (oQ-tRNA). In Shewanella woodyi (strain ATCC 51908 / MS32), this protein is S-adenosylmethionine:tRNA ribosyltransferase-isomerase.